Here is a 158-residue protein sequence, read N- to C-terminus: NAD(P)H-quinone oxidoreductase subunit J, chloroplastic (158 aa).

The protein belongs to the complex I 30 kDa subunit family. NDH is composed of at least 16 different subunits, 5 of which are encoded in the nucleus.

The protein localises to the plastid. It localises to the chloroplast thylakoid membrane. The enzyme catalyses a plastoquinone + NADH + (n+1) H(+)(in) = a plastoquinol + NAD(+) + n H(+)(out). The catalysed reaction is a plastoquinone + NADPH + (n+1) H(+)(in) = a plastoquinol + NADP(+) + n H(+)(out). Its function is as follows. NDH shuttles electrons from NAD(P)H:plastoquinone, via FMN and iron-sulfur (Fe-S) centers, to quinones in the photosynthetic chain and possibly in a chloroplast respiratory chain. The immediate electron acceptor for the enzyme in this species is believed to be plastoquinone. Couples the redox reaction to proton translocation, and thus conserves the redox energy in a proton gradient. The chain is NAD(P)H-quinone oxidoreductase subunit J, chloroplastic from Cucumis sativus (Cucumber).